Reading from the N-terminus, the 414-residue chain is Probable cytochrome P450 127A1 (414 aa).

A heme-binding site is contributed by Cys-364.

It belongs to the cytochrome P450 family. It depends on heme as a cofactor.

Cytochromes P450 are a group of heme-thiolate monooxygenases. They oxidize a variety of structurally unrelated compounds, including steroids, fatty acids, and xenobiotics. In Sinorhizobium fredii (strain NBRC 101917 / NGR234), this protein is Probable cytochrome P450 127A1 (cyp127A1).